Here is a 559-residue protein sequence, read N- to C-terminus: DNA primase (559 aa).

The segment at 37–61 (CPFHEERSASFSVNQIKGFYHCFGC) adopts a CHC2-type zinc-finger fold. In terms of domain architecture, Toprim spans 246–327 (KQVIVTEGYL…RGGVILFENN (82 aa)). Residues Glu252, Asp296, and Asp298 each coordinate Mg(2+).

It belongs to the DnaG primase family. Monomer. The C-terminal domain DnaB-binding domain exists as a dimer in solution. Interacts with DnaB via its C-terminal domain (residues 415-559 of DnaG); up to 3 DnaG fragments bind to a DnaB hexamer. Requires Zn(2+) as cofactor. Mg(2+) serves as cofactor.

It catalyses the reaction ssDNA + n NTP = ssDNA/pppN(pN)n-1 hybrid + (n-1) diphosphate.. RNA polymerase that catalyzes the synthesis of short RNA molecules used as primers for DNA polymerase during DNA replication. Stimulates the 5'-3' DNA helicase activity of DnaB. The polypeptide is DNA primase (Helicobacter pylori (strain ATCC 700392 / 26695) (Campylobacter pylori)).